The following is a 427-amino-acid chain: UPF0229 protein YeaH (427 aa).

Positions 79–90 (NDHFVQNDRIER) are enriched in basic and acidic residues. The tract at residues 79–110 (NDHFVQNDRIERPQGGGGGSGSGQGQASQDGE) is disordered. A compositionally biased stretch (gly residues) spans 92 to 102 (QGGGGGSGSGQ).

This sequence belongs to the UPF0229 family.

This is UPF0229 protein YeaH from Shigella boydii serotype 18 (strain CDC 3083-94 / BS512).